Reading from the N-terminus, the 236-residue chain is Pyridoxine 5'-phosphate synthase (236 aa).

A 3-amino-2-oxopropyl phosphate-binding site is contributed by Asn6. A 1-deoxy-D-xylulose 5-phosphate-binding site is contributed by Asp8–His9. Position 17 (Arg17) interacts with 3-amino-2-oxopropyl phosphate. Catalysis depends on His42, which acts as the Proton acceptor. Arg44 and His49 together coordinate 1-deoxy-D-xylulose 5-phosphate. Glu69 serves as the catalytic Proton acceptor. Position 99 (Thr99) interacts with 1-deoxy-D-xylulose 5-phosphate. Catalysis depends on His190, which acts as the Proton donor. 3-amino-2-oxopropyl phosphate is bound by residues Gly191 and Gly212 to His213.

Belongs to the PNP synthase family. In terms of assembly, homooctamer; tetramer of dimers.

The protein resides in the cytoplasm. The catalysed reaction is 3-amino-2-oxopropyl phosphate + 1-deoxy-D-xylulose 5-phosphate = pyridoxine 5'-phosphate + phosphate + 2 H2O + H(+). The protein operates within cofactor biosynthesis; pyridoxine 5'-phosphate biosynthesis; pyridoxine 5'-phosphate from D-erythrose 4-phosphate: step 5/5. Catalyzes the complicated ring closure reaction between the two acyclic compounds 1-deoxy-D-xylulose-5-phosphate (DXP) and 3-amino-2-oxopropyl phosphate (1-amino-acetone-3-phosphate or AAP) to form pyridoxine 5'-phosphate (PNP) and inorganic phosphate. This Chloroherpeton thalassium (strain ATCC 35110 / GB-78) protein is Pyridoxine 5'-phosphate synthase.